Here is a 283-residue protein sequence, read N- to C-terminus: Putative Ig-like domain-containing protein ORF10 (283 aa).

The signal sequence occupies residues methionine 1 to threonine 55. N-linked (GlcNAc...) asparagine; by host glycans are attached at residues asparagine 75, asparagine 92, asparagine 121, asparagine 157, asparagine 179, asparagine 198, asparagine 223, and asparagine 229. An Ig-like domain is found at glutamine 129–threonine 227.

The polypeptide is Putative Ig-like domain-containing protein ORF10 (Galliformes (FAdV-1)).